The following is a 466-amino-acid chain: ATP synthase subunit beta (466 aa).

Residue 152–159 (GGAGVGKT) participates in ATP binding.

The protein belongs to the ATPase alpha/beta chains family. In terms of assembly, F-type ATPases have 2 components, CF(1) - the catalytic core - and CF(0) - the membrane proton channel. CF(1) has five subunits: alpha(3), beta(3), gamma(1), delta(1), epsilon(1). CF(0) has three main subunits: a(1), b(2) and c(9-12). The alpha and beta chains form an alternating ring which encloses part of the gamma chain. CF(1) is attached to CF(0) by a central stalk formed by the gamma and epsilon chains, while a peripheral stalk is formed by the delta and b chains.

The protein resides in the cell inner membrane. It catalyses the reaction ATP + H2O + 4 H(+)(in) = ADP + phosphate + 5 H(+)(out). Its function is as follows. Produces ATP from ADP in the presence of a proton gradient across the membrane. The catalytic sites are hosted primarily by the beta subunits. In Helicobacter pylori (strain HPAG1), this protein is ATP synthase subunit beta.